Reading from the N-terminus, the 208-residue chain is Small ribosomal subunit protein uS4 (208 aa).

In terms of domain architecture, S4 RNA-binding spans 96 to 159 (SRLDNIVYRL…KKNEKVLEAL (64 aa)).

It belongs to the universal ribosomal protein uS4 family. In terms of assembly, part of the 30S ribosomal subunit. Contacts protein S5. The interaction surface between S4 and S5 is involved in control of translational fidelity.

In terms of biological role, one of the primary rRNA binding proteins, it binds directly to 16S rRNA where it nucleates assembly of the body of the 30S subunit. With S5 and S12 plays an important role in translational accuracy. The sequence is that of Small ribosomal subunit protein uS4 from Mycoplasma capricolum subsp. capricolum (strain California kid / ATCC 27343 / NCTC 10154).